Here is a 37-residue protein sequence, read N- to C-terminus: Large ribosomal subunit protein bL36A (37 aa).

This sequence belongs to the bacterial ribosomal protein bL36 family.

The polypeptide is Large ribosomal subunit protein bL36A (Methylobacillus flagellatus (strain ATCC 51484 / DSM 6875 / VKM B-1610 / KT)).